The primary structure comprises 232 residues: Phosphatidylserine decarboxylase proenzyme (232 aa).

The active-site Schiff-base intermediate with substrate; via pyruvic acid is the Ser-190. Ser-190 carries the post-translational modification Pyruvic acid (Ser); by autocatalysis.

The protein belongs to the phosphatidylserine decarboxylase family. PSD-A subfamily. Heterodimer of a large membrane-associated beta subunit and a small pyruvoyl-containing alpha subunit. The cofactor is pyruvate. In terms of processing, is synthesized initially as an inactive proenzyme. Formation of the active enzyme involves a self-maturation process in which the active site pyruvoyl group is generated from an internal serine residue via an autocatalytic post-translational modification. Two non-identical subunits are generated from the proenzyme in this reaction, and the pyruvate is formed at the N-terminus of the alpha chain, which is derived from the carboxyl end of the proenzyme. The post-translation cleavage follows an unusual pathway, termed non-hydrolytic serinolysis, in which the side chain hydroxyl group of the serine supplies its oxygen atom to form the C-terminus of the beta chain, while the remainder of the serine residue undergoes an oxidative deamination to produce ammonia and the pyruvoyl prosthetic group on the alpha chain.

It localises to the cell membrane. The catalysed reaction is a 1,2-diacyl-sn-glycero-3-phospho-L-serine + H(+) = a 1,2-diacyl-sn-glycero-3-phosphoethanolamine + CO2. The protein operates within phospholipid metabolism; phosphatidylethanolamine biosynthesis; phosphatidylethanolamine from CDP-diacylglycerol: step 2/2. Its function is as follows. Catalyzes the formation of phosphatidylethanolamine (PtdEtn) from phosphatidylserine (PtdSer). The polypeptide is Phosphatidylserine decarboxylase proenzyme (Rhizobium rhizogenes (strain K84 / ATCC BAA-868) (Agrobacterium radiobacter)).